Consider the following 825-residue polypeptide: Putative pentatricopeptide repeat-containing protein At2g01510 (825 aa).

PPR repeat units lie at residues 47 to 77 (DTCR…MPHK), 78 to 108 (NTVS…MPDR), 109 to 143 (TVVT…SSCT), 146 to 180 (DHVT…GFDT), 183 to 213 (FLTV…IPEK), 214 to 248 (DSVT…GHQP), 249 to 283 (SDFT…GFSR), 284 to 314 (DASV…MPEL), 315 to 349 (DFVS…GFDR), 350 to 384 (RNFP…TADS), 385 to 415 (ILHV…LPQR), 416 to 450 (TTVS…NLRA), 451 to 485 (DQST…GNLE), 486 to 516 (NVFS…MPDR), 517 to 551 (NAVS…GLQP), 552 to 587 (DSVS…GITP), and 588 to 618 (KKKH…MPFE). Positions 623-699 (MWSSVLNACR…VPAYSWVEVN (77 aa)) are type E motif. The interval 700-730 (HKIHVFSSNDQTHPNGDEIVRKINELTAEIE) is type E(+) motif. Residues 731-825 (REGYKPDTSS…EGVCSCGDYW (95 aa)) are type DYW motif.

This sequence belongs to the PPR family. PCMP-H subfamily.

This is Putative pentatricopeptide repeat-containing protein At2g01510 (PCMP-H36) from Arabidopsis thaliana (Mouse-ear cress).